Here is a 202-residue protein sequence, read N- to C-terminus: Small ribosomal subunit protein uS4c (202 aa).

The S4 RNA-binding domain maps to 90–152; sequence MRLDNLIFRL…AASKSLVNTY (63 aa).

The protein belongs to the universal ribosomal protein uS4 family. Part of the 30S ribosomal subunit. Contacts protein S5. The interaction surface between S4 and S5 is involved in control of translational fidelity.

The protein resides in the plastid. It is found in the chloroplast. One of the primary rRNA binding proteins, it binds directly to 16S rRNA where it nucleates assembly of the body of the 30S subunit. In terms of biological role, with S5 and S12 plays an important role in translational accuracy. The sequence is that of Small ribosomal subunit protein uS4c (rps4) from Emiliania huxleyi (Coccolithophore).